A 217-amino-acid chain; its full sequence is Protein-L-isoaspartate O-methyltransferase (217 aa).

Residue S65 is part of the active site.

This sequence belongs to the methyltransferase superfamily. L-isoaspartyl/D-aspartyl protein methyltransferase family.

The protein resides in the cytoplasm. It catalyses the reaction [protein]-L-isoaspartate + S-adenosyl-L-methionine = [protein]-L-isoaspartate alpha-methyl ester + S-adenosyl-L-homocysteine. Catalyzes the methyl esterification of L-isoaspartyl residues in peptides and proteins that result from spontaneous decomposition of normal L-aspartyl and L-asparaginyl residues. It plays a role in the repair and/or degradation of damaged proteins. The sequence is that of Protein-L-isoaspartate O-methyltransferase from Methanoregula boonei (strain DSM 21154 / JCM 14090 / 6A8).